The primary structure comprises 482 residues: Probable glycine dehydrogenase (decarboxylating) subunit 2 (482 aa).

K264 is subject to N6-(pyridoxal phosphate)lysine.

The protein belongs to the GcvP family. C-terminal subunit subfamily. As to quaternary structure, the glycine cleavage system is composed of four proteins: P, T, L and H. In this organism, the P 'protein' is a heterodimer of two subunits. Pyridoxal 5'-phosphate serves as cofactor.

It catalyses the reaction N(6)-[(R)-lipoyl]-L-lysyl-[glycine-cleavage complex H protein] + glycine + H(+) = N(6)-[(R)-S(8)-aminomethyldihydrolipoyl]-L-lysyl-[glycine-cleavage complex H protein] + CO2. Its function is as follows. The glycine cleavage system catalyzes the degradation of glycine. The P protein binds the alpha-amino group of glycine through its pyridoxal phosphate cofactor; CO(2) is released and the remaining methylamine moiety is then transferred to the lipoamide cofactor of the H protein. This chain is Probable glycine dehydrogenase (decarboxylating) subunit 2, found in Treponema denticola (strain ATCC 35405 / DSM 14222 / CIP 103919 / JCM 8153 / KCTC 15104).